We begin with the raw amino-acid sequence, 287 residues long: Probable endoribonuclease YicC (287 aa).

This sequence belongs to the YicC/YloC family. Requires a divalent metal cation as cofactor.

In terms of biological role, probably a ssRNA endonuclease. Might contribute to small RNA (sRNA) regulation. This is Probable endoribonuclease YicC from Salmonella typhimurium (strain LT2 / SGSC1412 / ATCC 700720).